The chain runs to 334 residues: Holliday junction branch migration complex subunit RuvB (334 aa).

The interval 4-186 is large ATPase domain (RuvB-L); it reads ADRLIAPISN…FGIVQRLEYY (183 aa). Residues isoleucine 25, arginine 26, glycine 67, lysine 70, threonine 71, threonine 72, 133-135, arginine 176, tyrosine 186, and arginine 223 each bind ATP; that span reads EDY. Threonine 71 is a Mg(2+) binding site. The segment at 187-257 is small ATPAse domain (RuvB-S); that stretch reads KVADLQHIVQ…TADRALNMLD (71 aa). The interval 260-334 is head domain (RuvB-H); sequence HQGFDYMDRK…RAYLHFGIEK (75 aa). Positions 315 and 320 each coordinate DNA.

This sequence belongs to the RuvB family. Homohexamer. Forms an RuvA(8)-RuvB(12)-Holliday junction (HJ) complex. HJ DNA is sandwiched between 2 RuvA tetramers; dsDNA enters through RuvA and exits via RuvB. An RuvB hexamer assembles on each DNA strand where it exits the tetramer. Each RuvB hexamer is contacted by two RuvA subunits (via domain III) on 2 adjacent RuvB subunits; this complex drives branch migration. In the full resolvosome a probable DNA-RuvA(4)-RuvB(12)-RuvC(2) complex forms which resolves the HJ.

The protein localises to the cytoplasm. The catalysed reaction is ATP + H2O = ADP + phosphate + H(+). Its function is as follows. The RuvA-RuvB-RuvC complex processes Holliday junction (HJ) DNA during genetic recombination and DNA repair, while the RuvA-RuvB complex plays an important role in the rescue of blocked DNA replication forks via replication fork reversal (RFR). RuvA specifically binds to HJ cruciform DNA, conferring on it an open structure. The RuvB hexamer acts as an ATP-dependent pump, pulling dsDNA into and through the RuvAB complex. RuvB forms 2 homohexamers on either side of HJ DNA bound by 1 or 2 RuvA tetramers; 4 subunits per hexamer contact DNA at a time. Coordinated motions by a converter formed by DNA-disengaged RuvB subunits stimulates ATP hydrolysis and nucleotide exchange. Immobilization of the converter enables RuvB to convert the ATP-contained energy into a lever motion, pulling 2 nucleotides of DNA out of the RuvA tetramer per ATP hydrolyzed, thus driving DNA branch migration. The RuvB motors rotate together with the DNA substrate, which together with the progressing nucleotide cycle form the mechanistic basis for DNA recombination by continuous HJ branch migration. Branch migration allows RuvC to scan DNA until it finds its consensus sequence, where it cleaves and resolves cruciform DNA. This chain is Holliday junction branch migration complex subunit RuvB, found in Vibrio cholerae serotype O1 (strain ATCC 39315 / El Tor Inaba N16961).